We begin with the raw amino-acid sequence, 44 residues long: Viresin (44 aa).

It belongs to the insect A10/OS-D protein family.

The protein resides in the secreted. In terms of biological role, has antibacterial activity against the Gram-negative bacteria E.coli and E.cloacae, but not against the Gram-negative bacteria P.aeruginosa, P.vulgaris, K.pneumoniae and S.enteritidis or the Gram-positive bacteria S.aureus, S.epidermidis and S.salivarius. This chain is Viresin, found in Heliothis virescens (Tobacco budworm moth).